Reading from the N-terminus, the 247-residue chain is MNGRADFREPNAEVPRPIPHIGADYIPTEEERRVFAECNDESFWFRSVPLAATSMLITQGLISKGILSSHPKYGSIPKLIFACIMGYFAGKLSYVKTCQEKFKNLENSPLGEALRSGQARRSSPTGHYSQRSKYDSNVSGHSSFGTSPAADNLEKEMLPHYEPIPFSASLNESTPTGITDHIAQGPDPNTEESPKRKNITYEELRNKNRESYEVTLTHKTDPSVRPMQERMPKKEVKVNKYGDTWDE.

The 112-residue stretch at 1-112 (MNGRADFREP…KNLENSPLGE (112 aa)) folds into the OCIA domain. Residues serine 108, serine 116, serine 123, and serine 193 each carry the phosphoserine modification. Disordered stretches follow at residues 113–150 (ALRSGQARRSSPTGHYSQRSKYDSNVSGHSSFGTSPAA), 171–198 (NESTPTGITDHIAQGPDPNTEESPKRKN), and 217–247 (THKTDPSVRPMQERMPKKEVKVNKYGDTWDE). Residues 119-146 (ARRSSPTGHYSQRSKYDSNVSGHSSFGT) are compositionally biased toward polar residues. Positions 217–240 (THKTDPSVRPMQERMPKKEVKVNK) are enriched in basic and acidic residues.

The protein belongs to the OCIAD1 family. In terms of assembly, interacts with OCIAD2. Interacts with STAT3.

The protein localises to the endosome. Functionally, maintains stem cell potency. Increases STAT3 phosphorylation and controls ERK phosphorylation. May act as a scaffold, increasing STAT3 recruitment onto endosomes. The chain is OCIA domain-containing protein 1 (Ociad1) from Bos taurus (Bovine).